The primary structure comprises 162 residues: Endoribonuclease YbeY (162 aa).

Residues His-128, His-132, and His-138 each contribute to the Zn(2+) site.

This sequence belongs to the endoribonuclease YbeY family. Zn(2+) is required as a cofactor.

The protein resides in the cytoplasm. Functionally, single strand-specific metallo-endoribonuclease involved in late-stage 70S ribosome quality control and in maturation of the 3' terminus of the 16S rRNA. This chain is Endoribonuclease YbeY, found in Lactococcus lactis subsp. cremoris (strain SK11).